The chain runs to 185 residues: Peptidyl-tRNA hydrolase (185 aa).

A tRNA-binding site is contributed by tyrosine 14. Histidine 19 serves as the catalytic Proton acceptor. 3 residues coordinate tRNA: tyrosine 64, asparagine 66, and asparagine 112.

It belongs to the PTH family. As to quaternary structure, monomer.

The protein localises to the cytoplasm. It catalyses the reaction an N-acyl-L-alpha-aminoacyl-tRNA + H2O = an N-acyl-L-amino acid + a tRNA + H(+). In terms of biological role, hydrolyzes ribosome-free peptidyl-tRNAs (with 1 or more amino acids incorporated), which drop off the ribosome during protein synthesis, or as a result of ribosome stalling. Its function is as follows. Catalyzes the release of premature peptidyl moieties from peptidyl-tRNA molecules trapped in stalled 50S ribosomal subunits, and thus maintains levels of free tRNAs and 50S ribosomes. This is Peptidyl-tRNA hydrolase from Lactobacillus acidophilus (strain ATCC 700396 / NCK56 / N2 / NCFM).